Reading from the N-terminus, the 434-residue chain is D-amino acid dehydrogenase (434 aa).

Residue 3 to 17 coordinates FAD; sequence VIVLGSGVIGTTTAY.

The protein belongs to the DadA oxidoreductase family. It depends on FAD as a cofactor.

The enzyme catalyses a D-alpha-amino acid + A + H2O = a 2-oxocarboxylate + AH2 + NH4(+). In terms of biological role, oxidative deamination of D-amino acids. The protein is D-amino acid dehydrogenase of Bordetella bronchiseptica (strain ATCC BAA-588 / NCTC 13252 / RB50) (Alcaligenes bronchisepticus).